The sequence spans 291 residues: MLEGQIIKALSGFYYVFSEGKIYQCRARGNFRKRNISPLVGDDVEFQVENKTDGYILDVLSRENALVRPPVANIDIAILVFSAVEPDFSTNLADRFLVAIEKEDIQPVICISKMDLATDAEKEQIAVYKEVYETIGYDVFVTNDEPDKEAIKDYISGKTAVIAGQSGVGKSTLLNSLNSDLTLKTAEISNSLGRGKHTTRHVELMPIGDGFVADTPGFSSIEWDDLQPETLQFCFPEMEDRRSGCKFRGCMHDNEPNCAVKTAVEANEIADFRYKHYIQILQELKNRKPRY.

The CP-type G domain occupies 63–221; sequence ENALVRPPVA…VADTPGFSSI (159 aa). GTP-binding positions include 112–115 and 164–172; these read SKMD and GQSGVGKST. Residues C245, C250, H252, and C258 each contribute to the Zn(2+) site.

The protein belongs to the TRAFAC class YlqF/YawG GTPase family. RsgA subfamily. Monomer. Associates with 30S ribosomal subunit, binds 16S rRNA. Zn(2+) serves as cofactor.

The protein localises to the cytoplasm. One of several proteins that assist in the late maturation steps of the functional core of the 30S ribosomal subunit. Helps release RbfA from mature subunits. May play a role in the assembly of ribosomal proteins into the subunit. Circularly permuted GTPase that catalyzes slow GTP hydrolysis, GTPase activity is stimulated by the 30S ribosomal subunit. In Listeria innocua serovar 6a (strain ATCC BAA-680 / CLIP 11262), this protein is Small ribosomal subunit biogenesis GTPase RsgA 2.